Consider the following 116-residue polypeptide: NADH-ubiquinone oxidoreductase chain 3 (116 aa).

Transmembrane regions (helical) follow at residues 3 to 23, 56 to 76, and 88 to 108; these read LFATILIIMTTLSLVLALVSF, FFLVAVLFPLFDLEIALLLPL, and TLFWAMTVLILLTLGLAYEWA.

Belongs to the complex I subunit 3 family. Core subunit of respiratory chain NADH dehydrogenase (Complex I) which is composed of 45 different subunits.

It localises to the mitochondrion inner membrane. It carries out the reaction a ubiquinone + NADH + 5 H(+)(in) = a ubiquinol + NAD(+) + 4 H(+)(out). Functionally, core subunit of the mitochondrial membrane respiratory chain NADH dehydrogenase (Complex I) which catalyzes electron transfer from NADH through the respiratory chain, using ubiquinone as an electron acceptor. Essential for the catalytic activity of complex I. The protein is NADH-ubiquinone oxidoreductase chain 3 (mt-nd3) of Danio rerio (Zebrafish).